Here is a 593-residue protein sequence, read N- to C-terminus: Aspartate--tRNA ligase (593 aa).

An L-aspartate-binding site is contributed by Glu-180. Residues 204 to 207 form an aspartate region; the sequence is QIFK. Residue Arg-226 participates in L-aspartate binding. ATP is bound by residues 226-228 and Gln-235; that span reads RDE. His-453 serves as a coordination point for L-aspartate. Glu-487 is an ATP binding site. Arg-494 lines the L-aspartate pocket. 539–542 is a binding site for ATP; the sequence is GLDR.

This sequence belongs to the class-II aminoacyl-tRNA synthetase family. Type 1 subfamily. Homodimer.

The protein resides in the cytoplasm. The enzyme catalyses tRNA(Asp) + L-aspartate + ATP = L-aspartyl-tRNA(Asp) + AMP + diphosphate. In terms of biological role, catalyzes the attachment of L-aspartate to tRNA(Asp) in a two-step reaction: L-aspartate is first activated by ATP to form Asp-AMP and then transferred to the acceptor end of tRNA(Asp). The sequence is that of Aspartate--tRNA ligase from Clostridium botulinum (strain 657 / Type Ba4).